The primary structure comprises 162 residues: Phosphopantetheine adenylyltransferase (162 aa).

Thr-9 contributes to the substrate binding site. Residues 9-10 and His-17 contribute to the ATP site; that span reads TF. Residues Lys-41, Leu-77, and Arg-91 each coordinate substrate. ATP contacts are provided by residues 92–94, Glu-102, and 127–133; these read GLR and RQAIASK.

Belongs to the bacterial CoaD family. As to quaternary structure, homohexamer. Mg(2+) serves as cofactor.

Its subcellular location is the cytoplasm. It carries out the reaction (R)-4'-phosphopantetheine + ATP + H(+) = 3'-dephospho-CoA + diphosphate. The protein operates within cofactor biosynthesis; coenzyme A biosynthesis; CoA from (R)-pantothenate: step 4/5. Functionally, reversibly transfers an adenylyl group from ATP to 4'-phosphopantetheine, yielding dephospho-CoA (dPCoA) and pyrophosphate. The polypeptide is Phosphopantetheine adenylyltransferase (Cereibacter sphaeroides (strain ATCC 17025 / ATH 2.4.3) (Rhodobacter sphaeroides)).